A 285-amino-acid polypeptide reads, in one-letter code: Cytochrome c1 (285 aa).

The signal sequence occupies residues 1–22 (MIRKLTLTAATALALSGGAAMA). Heme c contacts are provided by C58, C61, H62, and M207. The helical transmembrane segment at 251 to 269 (AGFTAVMFLTVLSVLLYLT) threads the bilayer.

The main subunits of complex b-c1 are: cytochrome b, cytochrome c1 and the Rieske protein. Binds 1 heme c group covalently per subunit.

It localises to the cell membrane. Functionally, component of the ubiquinol-cytochrome c reductase complex (complex III or cytochrome b-c1 complex), which is a respiratory chain that generates an electrochemical potential coupled to ATP synthesis. c1 functions as an electron donor to cytochrome c. This is Cytochrome c1 (petC) from Cereibacter sphaeroides (Rhodobacter sphaeroides).